A 657-amino-acid chain; its full sequence is Glycogen debranching enzyme (657 aa).

The Nucleophile role is filled by Asp336. Glu371 (proton donor) is an active-site residue. Residues Ala460–Lys479 form a disordered region.

This sequence belongs to the glycosyl hydrolase 13 family.

It catalyses the reaction Hydrolysis of (1-&gt;6)-alpha-D-glucosidic linkages to branches with degrees of polymerization of three or four glucose residues in limit dextrin.. It participates in glycan degradation; glycogen degradation. In terms of biological role, removes maltotriose and maltotetraose chains that are attached by 1,6-alpha-linkage to the limit dextrin main chain, generating a debranched limit dextrin. The polypeptide is Glycogen debranching enzyme (Escherichia coli (strain UTI89 / UPEC)).